The sequence spans 947 residues: Bifunctional glutamine synthetase adenylyltransferase/adenylyl-removing enzyme (947 aa).

Positions 1 to 440 are adenylyl removase; that stretch reads MTPLSSPLSQ…VFNELIGDDE (440 aa). The interval 450-947 is adenylyl transferase; sequence SEPWREVWQD…ASWRKWLVAV (498 aa).

Belongs to the GlnE family. Mg(2+) is required as a cofactor.

It catalyses the reaction [glutamine synthetase]-O(4)-(5'-adenylyl)-L-tyrosine + phosphate = [glutamine synthetase]-L-tyrosine + ADP. The catalysed reaction is [glutamine synthetase]-L-tyrosine + ATP = [glutamine synthetase]-O(4)-(5'-adenylyl)-L-tyrosine + diphosphate. Involved in the regulation of glutamine synthetase GlnA, a key enzyme in the process to assimilate ammonia. When cellular nitrogen levels are high, the C-terminal adenylyl transferase (AT) inactivates GlnA by covalent transfer of an adenylyl group from ATP to specific tyrosine residue of GlnA, thus reducing its activity. Conversely, when nitrogen levels are low, the N-terminal adenylyl removase (AR) activates GlnA by removing the adenylyl group by phosphorolysis, increasing its activity. The regulatory region of GlnE binds the signal transduction protein PII (GlnB) which indicates the nitrogen status of the cell. The sequence is that of Bifunctional glutamine synthetase adenylyltransferase/adenylyl-removing enzyme from Salmonella newport (strain SL254).